The primary structure comprises 62 residues: Large ribosomal subunit protein bL32 (62 aa).

Residues 1–20 (MAVPARHTSKQKKRSRRGHI) form a disordered region. Residues 7–20 (HTSKQKKRSRRGHI) are compositionally biased toward basic residues.

It belongs to the bacterial ribosomal protein bL32 family.

The polypeptide is Large ribosomal subunit protein bL32 (Lactobacillus acidophilus (strain ATCC 700396 / NCK56 / N2 / NCFM)).